Here is a 244-residue protein sequence, read N- to C-terminus: Carboxy-S-adenosyl-L-methionine synthase (244 aa).

Residues tyrosine 41, 66–68 (GCS), 91–92 (DN), 119–120 (DI), asparagine 134, and arginine 201 contribute to the S-adenosyl-L-methionine site.

This sequence belongs to the class I-like SAM-binding methyltransferase superfamily. Cx-SAM synthase family. In terms of assembly, homodimer.

The enzyme catalyses prephenate + S-adenosyl-L-methionine = carboxy-S-adenosyl-L-methionine + 3-phenylpyruvate + H2O. Catalyzes the conversion of S-adenosyl-L-methionine (SAM) to carboxy-S-adenosyl-L-methionine (Cx-SAM). This is Carboxy-S-adenosyl-L-methionine synthase from Photobacterium profundum (strain SS9).